The sequence spans 588 residues: Putative calcium-binding mitochondrial carrier F55A11.4 (588 aa).

The segment covering 1–14 has biased composition (polar residues); that stretch reads MINKNEQTESTSGA. Residues 1–25 are disordered; the sequence is MINKNEQTESTSGAAEQKEDDEEQY. 4 EF-hand domains span residues 73–108, 109–139, 140–175, and 176–211; these read EKER…ETPH, IPAN…SYVL, ENEQ…IGVP, and LDDH…YPSS. Ca(2+) contacts are provided by aspartate 86, aspartate 88, aspartate 90, threonine 92, and aspartate 97. Ca(2+) contacts are provided by aspartate 153, asparagine 155, aspartate 157, and glutamate 164. 3 Solcar repeats span residues 246–332, 342–428, and 440–529; these read GIWW…LKRL, ISTF…LKRT, and PGVL…VRTG. Transmembrane regions (helical) follow at residues 252-269, 307-326, 352-365, 403-422, 446-463, and 504-523; these read LVAG…TAPF, GNGI…FMCY, SAAG…IYPM, GYLP…LAIY, LACG…SYPF, and GITP…YVVY.

It belongs to the mitochondrial carrier (TC 2.A.29) family. As to quaternary structure, homodimer (via N-terminus).

The protein localises to the mitochondrion inner membrane. Functionally, mitochondrial and calcium-binding carrier that catalyzes the calcium-dependent exchange of cytoplasmic glutamate with mitochondrial aspartate across the mitochondrial inner membrane. This chain is Putative calcium-binding mitochondrial carrier F55A11.4, found in Caenorhabditis elegans.